We begin with the raw amino-acid sequence, 1074 residues long: MILSITFQLDPISNNSTSLSNSIDNRSSINVTALQMQQGSKTYNLDQNSSYKTVFLAICQLFGIKESSAQDYCLQLESSKKYLNWPPQSDESKTKHIVKQLYESGETALVLQLNPTYRSSKWVKALNDSETNEKDIMFHLKYKLQENEFAESFIEQNGMEGILRMVTNGKGNAQTYSLASLRACLEYVSAMEIITKTPHLVKQLFSLVDSNVVGVCRGALELLFVLCDFRKEEGFKSVHLAAKGTAVAQGKKPYLNVIKLLDSGDLETKINAFTLLNVLLSNCPTDEKVGKLCKKWGELGLDDKLRSLTSIQQQEFQIQLEIYEETSGVNLRTKASRLEAICNRLKSKLTEYEAQQPLIAILKEELKLAQQLIKEASTDRVFLSSHPMQRYLGPTIQSYPADLSFLKTTAAERDKINEFEKKILAINEQLRQETKLSEELKNQVLANKKQFDSTIAELNEENQRLTQVEVKFKLQQSISPSQDSSNNQKASSSSSNTSTLNDSDIQSIQSSLKEATLEIERLKLAIEEKMPPNEAQQIFSQSLITTAAFTPTSPDISNDGQPISGGGAPPPSPSPPPPISGGGAPPPPPPPPPPPSGGGAPPPPPPPPPSGGKKAGAPGAPPTGPAAIQPNKPVINPSSKMKPLYWKRIILPPSNRNESIWDQVLEPTFDSKDFENLFCAKKKAVDSSLSTNPSSTTGKEGEKVKLVSLVDIKKSNSIAFMLAKIPTAEGLKKAIDTVDNSILGKEIIKTLITNVPTEQDYQLIKGSEIHESKLDKPERWILEIYGFPMMKERLVAWLFQLEYQEMYNNIIQILEKLQNAIKDTKSSDSLKKILGIVLVLGNYMNGGSGRGQADGFTLEILDSLATSKDVENKTSLLDYVSKISMEKYPKTMNVAQELDSLKLVQLSISDMSTDINDLEKQFNISKNNCKKVLEANIPSSSKFQSTIGSFLEKTEIDIKNLKENQKNIVDSFIQLVEFFGYPKSYATTASCQQFFNSIYSFSLLFSKQCQKIEKEREALAKASGDNGAVQNKKIAGGADPLAALANAIKLGQTGLRKRPGPENSSGGSQLNLNK.

The GBD/FH3 domain occupies L34–I423. Disordered regions lie at residues Q476–S507 and F549–S639. Residues S481 to S503 show a composition bias toward low complexity. A coiled-coil region spans residues D502–M530. A compositionally biased stretch (polar residues) spans F549–Q561. The segment covering A568 to S610 has biased composition (pro residues). The region spanning G597 to T623 is the FH1 domain. The region spanning N631–N1031 is the FH2 domain. Positions D914–S971 form a coiled coil. Residues G1037–N1073 form the DAD domain. Positions T1053 to K1074 are disordered. The span at E1062–K1074 shows a compositional bias: polar residues.

This sequence belongs to the formin homology family. Diaphanous subfamily. In terms of assembly, interacts (via GBD/FH3 domain) with activated Rho-GTPases.

Functionally, formins play an important role in the nucleation of actin and the formation of linear actin filaments. This Dictyostelium discoideum (Social amoeba) protein is Formin-G (forG).